We begin with the raw amino-acid sequence, 126 residues long: Glycine cleavage system H protein (126 aa).

Residues 24 to 105 form the Lipoyl-binding domain; sequence TLTVGITDHA…AYGVWLFKIK (82 aa). Residue Lys65 is modified to N6-lipoyllysine.

It belongs to the GcvH family. In terms of assembly, the glycine cleavage system is composed of four proteins: P, T, L and H. (R)-lipoate serves as cofactor.

Its function is as follows. The glycine cleavage system catalyzes the degradation of glycine. The H protein shuttles the methylamine group of glycine from the P protein to the T protein. In Burkholderia ambifaria (strain MC40-6), this protein is Glycine cleavage system H protein.